The sequence spans 199 residues: Recombination protein RecR (199 aa).

The C4-type zinc finger occupies 56-71 (CQRCNTFTEGDICERC). The Toprim domain occupies 79-174 (ELLCVVETPV…GVTRIARGVP (96 aa)).

This sequence belongs to the RecR family.

Its function is as follows. May play a role in DNA repair. It seems to be involved in an RecBC-independent recombinational process of DNA repair. It may act with RecF and RecO. The protein is Recombination protein RecR of Dechloromonas aromatica (strain RCB).